Here is a 41-residue protein sequence, read N- to C-terminus: uncharacterized protein (41 aa).

The signal sequence occupies residues 1–23 (MNFLMRAIFSLLLLFTLSIPVIS).

This is an uncharacterized protein from Escherichia coli (strain K12).